The primary structure comprises 236 residues: CHD1 helical C-terminal domain containing protein 1 (236 aa).

The interval 44–145 (LDQDTFKTCK…SSQPAKFLVT (102 aa)) is CHD1 helical C-terminal domain (CHCT). Positions 184-236 (LSNMQTPGQGSPLPGQPRSQDHVKKDSLRELSQKPKLKRKRIKEAPETPETEP) are disordered. A compositionally biased stretch (basic and acidic residues) spans 202-216 (SQDHVKKDSLRELSQ).

The protein localises to the cytoplasm. It is found in the nucleus. Functionally, may play a role in regulation of apoptosis. In Homo sapiens (Human), this protein is CHD1 helical C-terminal domain containing protein 1.